A 251-amino-acid polypeptide reads, in one-letter code: uncharacterized protein (251 aa).

The Response regulatory domain maps to 3–118; that stretch reads KVVICDDERI…QLEHILDILV (116 aa). At aspartate 55 the chain carries 4-aspartylphosphate. The HTH araC/xylS-type domain maps to 152–249; the sequence is NQILSQIKQH…HMSPSDYNKL (98 aa). 2 DNA-binding regions (H-T-H motif) span residues 169–190 and 216–239; these read LDLINPIVVSESYAMRTFKEHV and HYEIAEKVGFSEYKMFCYHFKKYL.

In terms of processing, phosphorylated by SE_0166.

The protein resides in the cytoplasm. Its function is as follows. Probable member of the two-component regulatory system SE_0166/SE_0165. This is an uncharacterized protein from Staphylococcus epidermidis (strain ATCC 12228 / FDA PCI 1200).